Here is a 212-residue protein sequence, read N- to C-terminus: Probable GH family 25 lysozyme 2 (212 aa).

The signal sequence occupies residues Met-1 to Ala-19. In terms of domain architecture, Ch-type lysozyme spans Ile-20–Pro-212. Residues Asp-24, Asp-112, and Glu-114 contribute to the active site.

This sequence belongs to the glycosyl hydrolase 25 family.

It is found in the secreted. It catalyses the reaction Hydrolysis of (1-&gt;4)-beta-linkages between N-acetylmuramic acid and N-acetyl-D-glucosamine residues in a peptidoglycan and between N-acetyl-D-glucosamine residues in chitodextrins.. This chain is Probable GH family 25 lysozyme 2, found in Dictyostelium discoideum (Social amoeba).